A 498-amino-acid chain; its full sequence is Probable FAD-binding monooxygenase AlmA (498 aa).

A helical transmembrane segment spans residues 4–24 (HIDILIVGAGISGIGIAAHLS). Residues Ser15, Glu36, Asp56, Phe62, and Val104 each contribute to the FAD site. Residue 54–56 (RSD) coordinates NADP(+). Residues 184–190 (SGATAIT), 208–209 (RS), and 292–293 (RL) each bind NADP(+). Val395 is a binding site for FAD.

It belongs to the FAD-binding monooxygenase family. FAD serves as cofactor.

It is found in the cell membrane. It functions in the pathway hydrocarbon metabolism; alkane degradation. Functionally, is able to catalyze the degradation of n-alkanes with C chain lengths of 32 and 36. Probably allows Acinetobacter baylyi strain ADP1 to grow on the long-chain n-alkane dotriacontane (C32H66) as a sole carbon source. This is Probable FAD-binding monooxygenase AlmA from Acinetobacter baylyi (strain ATCC 33305 / BD413 / ADP1).